The following is a 202-amino-acid chain: LexA repressor (202 aa).

Positions 28–48 form a DNA-binding region, H-T-H motif; it reads RAEIAQRLGFRSPNAAEEHLK. Active-site for autocatalytic cleavage activity residues include Ser119 and Lys156.

It belongs to the peptidase S24 family. As to quaternary structure, homodimer.

It carries out the reaction Hydrolysis of Ala-|-Gly bond in repressor LexA.. Functionally, represses a number of genes involved in the response to DNA damage (SOS response), including recA and lexA. Binds to the 16 bp palindromic sequence 5'-CTGTATATATATACAG-3'. In the presence of single-stranded DNA, RecA interacts with LexA causing an autocatalytic cleavage which disrupts the DNA-binding part of LexA, leading to derepression of the SOS regulon and eventually DNA repair. This is LexA repressor from Salmonella agona (strain SL483).